Here is a 688-residue protein sequence, read N- to C-terminus: Glycine--tRNA ligase beta subunit (688 aa).

Belongs to the class-II aminoacyl-tRNA synthetase family. As to quaternary structure, tetramer of two alpha and two beta subunits.

It localises to the cytoplasm. It catalyses the reaction tRNA(Gly) + glycine + ATP = glycyl-tRNA(Gly) + AMP + diphosphate. The protein is Glycine--tRNA ligase beta subunit of Aliivibrio fischeri (strain MJ11) (Vibrio fischeri).